The primary structure comprises 115 residues: Splicing factor 3B subunit 6-like protein (115 aa).

The tract at residues 9–22 is interaction with pre-mRNA branch site; it reads EVNSILFIKNLSFK. The region spanning 12–87 is the RRM domain; sequence SILFIKNLSF…RYLVVHYYNP (76 aa).

It localises to the nucleus. Its function is as follows. Necessary for the splicing of pre-mRNA. This Schizosaccharomyces pombe (strain 972 / ATCC 24843) (Fission yeast) protein is Splicing factor 3B subunit 6-like protein.